The following is a 257-amino-acid chain: MLSRRIIPCLDVRDGRVVKGVKFRDHVDMGDIVELALRYRDHGADELVFYDIGASPQGRSVDYRWVERVARLIDIPFCVAGGIGEVETARAVLHAGADKISINSPALRQPALISALAEAFGVQCVVVGIDSIREADGQWRVRCNTGDPDKTQALPLRTLDWIVEAQRLGAGEIVLNCMDSDGVRCGYDIAQLSQARALCQVPLVASGGAGDMQHFADVFHKADVDGALAASVFHSGAISIPGLKQFLREQQIEVRDV.

Active-site residues include aspartate 11 and aspartate 130.

Belongs to the HisA/HisF family. Heterodimer of HisH and HisF.

The protein localises to the cytoplasm. It catalyses the reaction 5-[(5-phospho-1-deoxy-D-ribulos-1-ylimino)methylamino]-1-(5-phospho-beta-D-ribosyl)imidazole-4-carboxamide + L-glutamine = D-erythro-1-(imidazol-4-yl)glycerol 3-phosphate + 5-amino-1-(5-phospho-beta-D-ribosyl)imidazole-4-carboxamide + L-glutamate + H(+). It participates in amino-acid biosynthesis; L-histidine biosynthesis; L-histidine from 5-phospho-alpha-D-ribose 1-diphosphate: step 5/9. Its function is as follows. IGPS catalyzes the conversion of PRFAR and glutamine to IGP, AICAR and glutamate. The HisF subunit catalyzes the cyclization activity that produces IGP and AICAR from PRFAR using the ammonia provided by the HisH subunit. This chain is Imidazole glycerol phosphate synthase subunit HisF, found in Xylella fastidiosa (strain M23).